The sequence spans 189 residues: Thymidylate kinase (189 aa).

ATP is bound at residue 7 to 14 (GIDTAGKS).

The protein belongs to the thymidylate kinase family.

The catalysed reaction is dTMP + ATP = dTDP + ADP. Its function is as follows. Phosphorylation of dTMP to form dTDP in both de novo and salvage pathways of dTTP synthesis. In Aliarcobacter butzleri (strain RM4018) (Arcobacter butzleri), this protein is Thymidylate kinase.